The primary structure comprises 188 residues: Elongation factor P (188 aa).

Belongs to the elongation factor P family.

Its subcellular location is the cytoplasm. It functions in the pathway protein biosynthesis; polypeptide chain elongation. In terms of biological role, involved in peptide bond synthesis. Stimulates efficient translation and peptide-bond synthesis on native or reconstituted 70S ribosomes in vitro. Probably functions indirectly by altering the affinity of the ribosome for aminoacyl-tRNA, thus increasing their reactivity as acceptors for peptidyl transferase. The polypeptide is Elongation factor P (Rickettsia rickettsii (strain Iowa)).